The primary structure comprises 92 residues: C-C motif chemokine 4 (92 aa).

The N-terminal stretch at 1-23 (MKLCVTVLSLLVLMAAFCSPALS) is a signal peptide. 2 disulfides stabilise this stretch: Cys-34/Cys-58 and Cys-35/Cys-74.

It belongs to the intercrine beta (chemokine CC) family. Homodimer. Interacts with CCR5.

It localises to the secreted. Its function is as follows. Monokine with inflammatory and chemokinetic properties. The sequence is that of C-C motif chemokine 4 (CCL4) from Bos taurus (Bovine).